Here is a 769-residue protein sequence, read N- to C-terminus: Serine protease HtrA-like (769 aa).

Residues 1-20 are compositionally biased toward basic residues; the sequence is MDIGKKHVIPKSQYRRKRRE. The disordered stretch occupies residues 1–388; sequence MDIGKKHVIP…KKATSKLNKG (388 aa). 3 stretches are compositionally biased toward basic and acidic residues: residues 21-64, 71-87, and 96-108; these read FFHN…ERFK, LEQR…EESK, and YNKD…DVSK. A compositionally biased stretch (polar residues) spans 126–139; that stretch reads YEQNTEATLSTNST. Basic and acidic residues predominate over residues 140–186; sequence DKVESTDMRKLSSDKNKVGHEEQHVLSKPSEHDKETRIDFESSRTDS. A compositionally biased stretch (polar residues) spans 247-262; it reads QQSQNEQTKTYTYGDS. Composition is skewed to basic and acidic residues over residues 264-296 and 310-330; these read QNDK…HIVD and KIDD…HKQN. Residues 331 to 347 show a composition bias toward polar residues; it reads ADSSETVGYQSQSSASH. Residues 348 to 364 are compositionally biased toward basic and acidic residues; sequence RSTEKRNMAINDHDKLN. The span at 366-388 shows a compositional bias: polar residues; that stretch reads QKPNTKTSANNNQKKATSKLNKG. A helical transmembrane segment spans residues 410 to 430; the sequence is LVILMGIIILIVILNAIFNNV. Residues His504, Asp534, and Ser619 each act as charge relay system in the active site. Positions 680-733 constitute a PDZ domain; the sequence is IASLNSFERQAVKLLGKVKNGVVVDQVDNNGLADQSGLKKGDVITELDGKLLED.

It belongs to the peptidase S1C family.

It is found in the cell membrane. The sequence is that of Serine protease HtrA-like from Staphylococcus aureus (strain MRSA252).